The sequence spans 1070 residues: Potassium/chloride cotransporter 3 (1070 aa).

15 helical membrane-spanning segments follow: residues 92–112 (GVML…TMFI), 114–134 (LFWV…AICC), 142–162 (ISLS…YFII), 174–194 (VGIL…VGGV), 196–216 (VILM…LHDT), 228–248 (LYGT…VKFV), 251–271 (LAPV…GGGI), 400–420 (FFML…GTNM), 433–453 (VGTI…AILF), 473–493 (TMVV…GAFL), 534–554 (PFLG…LGAV), 557–577 (IAEV…LIAV), 600–620 (LLGA…LACI), 791–811 (LVLF…LIVT), and 827–847 (FIDI…AYLL).

In terms of tissue distribution, expressed in the amphid sheath glia and the cephalic sheath glia. Also expressed in the inner labial and outer labial sheath and socket glia and as well as phasmid sheath glia.

It localises to the cell membrane. Functionally, probable potassium/chloride cotransporter that functions in the amphid sheath glial cells to regulate thermotaxis behavior. By maintaining chloride homeostasis, negatively regulates guanylate cyclase gcy-8 in the thermosensory AFD neurons and thereby controls the microvilli receptive ending morphology of the AFD neurons and thermotaxis. Modulates the temperature-evoked neuronal activity of the AFD neurons such as calcium responses to temperature gradients. Might also play a role in the chemotaxis behavior mediated by the sensory neurons AWA and AWC. This chain is Potassium/chloride cotransporter 3 (kcc-3), found in Caenorhabditis elegans.